We begin with the raw amino-acid sequence, 84 residues long: Large ribosomal subunit protein eL34 (84 aa).

This sequence belongs to the eukaryotic ribosomal protein eL34 family.

The sequence is that of Large ribosomal subunit protein eL34 from Pyrobaculum islandicum (strain DSM 4184 / JCM 9189 / GEO3).